Here is a 1473-residue protein sequence, read N- to C-terminus: NACHT, LRR and PYD domains-containing protein 1 (1473 aa).

A Pyrin domain is found at 1 to 92; that stretch reads MAGGAWGRLA…CAQAQEGAGH (92 aa). The segment at 90–113 is disordered; the sequence is AGHSPSFPYSPSEPHLGSPSQPTS. Phosphoserine; by MAPK11 and MAPK14 is present on residues serine 93, serine 99, and serine 101. Position 107 is a phosphoserine; by MAPK14 (serine 107). The ZAKalpha motif 1 motif lies at 111 to 117; that stretch reads PTSTAVL. Position 112 is a phosphothreonine; by MAPK11, MAPK14 and MAP3K20 (threonine 112). Phosphoserine; by MAP3K20 is present on serine 113. A phosphothreonine; by MAP3K20 mark is found at threonine 114 and threonine 129. Serine 132 bears the Phosphoserine; by MAP3K20 mark. The segment at 160-254 is disordered; it reads LPSSPDHESP…HTSLQPHHHP (95 aa). Phosphoserine; by MAPK14 is present on serine 163. A Phosphoserine; by MAPK11 and MAPk14 modification is found at serine 168. Residue serine 170 is modified to Phosphoserine; by MAPK11 and MAPK14. Residues 170-182 are compositionally biased toward polar residues; the sequence is SQESPNAPTSTAV. Serine 173 carries the phosphoserine; by MAPK11 modification. The ZAKalpha motif 2 motif lies at 177–183; it reads PTSTAVL. Phosphothreonine; by MAPK11 is present on threonine 178. A Phosphoserine; by MAPK11 and MAP3K20 modification is found at serine 179. The residue at position 180 (threonine 180) is a Phosphothreonine; by MAPK11 and MAP3K20. The segment covering 218-231 has biased composition (basic and acidic residues); the sequence is EIREREREKSEKGR. Positions 328 to 637 constitute an NACHT domain; that stretch reads RIVILQGAAG…EFFAAMSYVL (310 aa). 334–341 provides a ligand contact to ATP; sequence GAAGIGKS. LRR repeat units follow at residues 809–830, 838–858, 866–887, 895–915, 923–944, and 950–973; these read NLKE…SLCK, LLET…KDLA, TLTE…HLCQ, KLQR…QDLA, SLKE…LLCE, and ACKL…ELRA. The segment at 991–1017 is disordered; it reads VMTPTEGLDTGEMSNSTSSLKRQRLGS. The segment at 1079–1212 is ZU5; that stretch reads FWGPTGPVAT…HHIVLENPSF (134 aa). In terms of domain architecture, FIIND spans 1079–1364; the sequence is FWGPTGPVAT…LMPATTLIPP (286 aa). Residues 1213-1364 form a UPA region; that stretch reads SPLGVLLKMI…LMPATTLIPP (152 aa). One can recognise a CARD domain in the interval 1374-1463; the sequence is DAPQLLHFVD…HLIMELWEKG (90 aa).

It belongs to the NLRP family. Interacts (via LRR repeats) with BCL2 and BCL2L1 (via the loop between motifs BH4 and BH3); these interactions reduce NLRP1 inflammasome-induced CASP1 activation and IL1B release, possibly by impairing NLRP1 interaction with PYCARD. Interacts with NOD2; this interaction is enhanced in the presence of muramyl dipeptide (MDP) and increases IL1B release. Interacts with EIF2AK2/PKR; this interaction requires EIF2AK2 activity, is accompanied by EIF2AK2 autophosphorylation and promotes inflammasome assembly in response to danger-associated signals. Interacts with MEFV; this interaction targets NLRP1 to degradation by autophagy, hence preventing excessive IL1B- and IL18-mediated inflammation. Binds (via LRR domain) to dsDNA and dsRNA. Interacts with DPP9; leading to inhibit activation of the inflammasome. DPP9 acts via formation of a ternary complex, composed of a DPP9 homodimer, one full-length NLRP1 protein, and one cleaved C-terminus of NLRP1 (NACHT, LRR and PYD domains-containing protein 1, C-terminus). Interacts with DPP8; leading to inhibit activation of the inflammasome, probably via formation of a ternary complex with DPP8. In terms of assembly, interacts with the C-terminal part of NLRP1 (NACHT, LRR and PYD domains-containing protein 1, C-terminus) in absence of pathogens and other damage-associated signals. As to quaternary structure, interacts with the N-terminal part of NLRP1 (NACHT, LRR and PYD domains-containing protein 1, N-terminus) in absence of pathogens and other damage-associated signals. Homomultimer; forms the NLRP1 inflammasome polymeric complex, a filament composed of homopolymers of this form in response to pathogens and other damage-associated signals. The NLRP1 inflammasome polymeric complex associates with PYCARD/ASC. Interacts (via CARD domain) with PYCARD/ASC (via CARD domain); leading to pro-caspase-1 (proCASP1) recruitment. Pro-caspase-1 (proCASP1) filament formation increases local enzyme concentration, resulting in trans-autocleavage and activation. Active CASP1 then processes IL1B and IL18 precursors, leading to the release of mature cytokines in the extracellular milieu and inflammatory response. (Microbial infection) Interacts with vaccinia virus protein F1. In terms of assembly, (Microbial infection) Interacts with human herpes virus 8/HHV-8 proteins ORF45; relieving autoinhibition of the NLRP1 inflammasome. Autocatalytically cleaved. Autocatalytic cleavage in FIIND region occurs constitutively, prior to activation signals, and is required for inflammasome activity (IL1B release), possibly by facilitating CASP1 binding. Both N- and C-terminal parts remain associated non-covalently. Post-translationally, ubiquitinated by the cullin:ZER1/ZYG11B complex in response to pathogen-associated signals, leading to its degradation by the proteasome and subsequent release of the cleaved C-terminal part of the protein (NACHT, LRR and PYD domains-containing protein 1, C-terminus), which polymerizes and forms the NLRP1 inflammasome. In terms of processing, phosphorylated by MAP3K20 isoform ZAKalpha, MAPK11 and MAPK14 in response to UV-B irradiation and ribosome collisions, promoting activation of the NLRP1 inflammasome and pyroptosis. (Microbial infection) Cleaved between Gln-130 and Gly-131 by the Protease 3C from various human enteroviruses and rhinoviruses (EV68, EV71, Coxsackievirus B3, HRV-14 and HRV-16). This cleavage triggers N-glycine-mediated proteasomal degradation of the autoinhibitory NLRP1 N-terminal fragment via the cullin:ZER1/ZYG11B complex which liberates the activating C-terminal fragment and activates NLRP1 inflammasome. Post-translationally, (Microbial infection) Cleaved between Gln-333 and Gly-334 by the 3C-like proteinase nsp5 from human coronavirus SARS-CoV-2. This cleavage liberates the activating C-terminal fragment and activates NLRP1 inflammasome, leading to downstream activation of GSDME and lung epithelial cell death. As to expression, widely expressed. Abundantly expressed in primary immune cells (isoform 1 and isoform 2), including in neutrophils, monocytes/macrophages, dendritic cells (mostly Langerhans cells), and B- and T-lymphocytes (at protein level). Strongly expressed in epithelial cells lining the glandular epithelium, such as that of the gastrointestinal tract (stomach, small intestine, colon), the respiratory tract (trachea and bronchi), and the endometrial and endocervical glands, gallbladder, prostate, and breast (at protein level). In testis, expressed in spermatogonia and primary spermatocytes, but not in Sertoli cells (at protein level). In the brain, expressed in neurons, in particular in pyramidal ones and in oligodendrocytes, but not detected in microglia (at protein level). Expressed in adult and fetal ocular tissues, including in adult and 24-week old fetal choroid, sclera, cornea, and optic nerve, as well as in adult retina and fetal retina/retinal pigment epithelium. Highly expressed in the skin throughout the epidermis and in dermal fibroblasts, in both glabrous skin and plantar skin. It is detected in keratinocytes, but not in melanocytes. Expressed in epidermal appendages such as hair follicles.

Its subcellular location is the cytoplasm. It is found in the cytosol. The protein localises to the nucleus. The protein resides in the inflammasome. It catalyses the reaction ATP + H2O = ADP + phosphate + H(+). Its activity is regulated as follows. NLRP1 inflammasome is activated by cleavage by the Protease 3C from various human enteroviruses and rhinoviruses (EV68, EV71, Coxsackievirus B3, HRV-14 and HRV-16): cleavage promotes ubiquitination and degradation of the N-terminal part, releasing the cleaved C-terminal part of the protein (NACHT, LRR and PYD domains-containing protein 1, C-terminus), which polymerizes and forms the NLRP1 inflammasome. Activated double-stranded RNA: positive-strand RNA viruses such as Semliki forest virus and long dsRNA activate the NLRP1 inflammasome. In contrast to its mouse ortholog, not activated by Bacillus anthracis lethal toxin. NLRP1 inflammasome is inhibited by DPP8 and DPP9, which sequester the C-terminal fragment of NLRP1 (NACHT, LRR and PYD domains-containing protein 1, C-terminus) in a ternary complex, thereby preventing NLRP1 oligomerization and activation. NLRP1 inflammasome is activated by Val-boroPro (Talabostat, PT-100), an inhibitor of dipeptidyl peptidases DPP8 and DPP9. Val-boroPro relieves inhibition of DPP8 and/or DPP9 by promoting disruption of the ternary complex, releasing its C-terminal part from autoinhibition. ATPase activity is activated by dsRNA-binding but not dsDNA-binding. With respect to regulation, (Microbial infection) The NLRP1 inflammasome is activated by human herpes virus 8/HHV-8 protein ORF45, which interacts with the N-terminal part of NLRP1 and promotes its translocation into the nucleus, relieving autoinhibition and leading to activation. (Microbial infection) NLRP1 inflammasome is activated by cleavage by the 3C-like proteinase nsp5 from human coronavirus SARS-CoV-2. Functionally, acts as the sensor component of the NLRP1 inflammasome, which mediates inflammasome activation in response to various pathogen-associated signals, leading to subsequent pyroptosis. Inflammasomes are supramolecular complexes that assemble in the cytosol in response to pathogens and other damage-associated signals and play critical roles in innate immunity and inflammation. Acts as a recognition receptor (PRR): recognizes specific pathogens and other damage-associated signals, such as cleavage by some human enteroviruses and rhinoviruses, double-stranded RNA, UV-B irradiation, or Val-boroPro inhibitor, and mediates the formation of the inflammasome polymeric complex composed of NLRP1, CASP1 and PYCARD/ASC. In response to pathogen-associated signals, the N-terminal part of NLRP1 is degraded by the proteasome, releasing the cleaved C-terminal part of the protein (NACHT, LRR and PYD domains-containing protein 1, C-terminus), which polymerizes and associates with PYCARD/ASC to initiate the formation of the inflammasome complex: the NLRP1 inflammasome recruits pro-caspase-1 (proCASP1) and promotes caspase-1 (CASP1) activation, which subsequently cleaves and activates inflammatory cytokines IL1B and IL18 and gasdermin-D (GSDMD), leading to pyroptosis. In the absence of GSDMD expression, the NLRP1 inflammasome is able to recruit and activate CASP8, leading to activation of gasdermin-E (GSDME). Activation of NLRP1 inflammasome is also required for HMGB1 secretion; the active cytokines and HMGB1 stimulate inflammatory responses. Binds ATP and shows ATPase activity. Plays an important role in antiviral immunity and inflammation in the human airway epithelium. Specifically recognizes a number of pathogen-associated signals: upon infection by human rhinoviruses 14 and 16 (HRV-14 and HRV-16), NLRP1 is cleaved and activated which triggers NLRP1-dependent inflammasome activation and IL18 secretion. Positive-strand RNA viruses, such as Semliki forest virus and long dsRNA activate the NLRP1 inflammasome, triggering IL1B release in a NLRP1-dependent fashion. Acts as a direct sensor for long dsRNA and thus RNA virus infection. May also be activated by muramyl dipeptide (MDP), a fragment of bacterial peptidoglycan, in a NOD2-dependent manner. The NLRP1 inflammasome is also activated in response to UV-B irradiation causing ribosome collisions: ribosome collisions cause phosphorylation and activation of NLRP1 in a MAP3K20-dependent manner, leading to pyroptosis. Constitutes the precursor of the NLRP1 inflammasome, which mediates autoproteolytic processing within the FIIND domain to generate the N-terminal and C-terminal parts, which are associated non-covalently in absence of pathogens and other damage-associated signals. In terms of biological role, regulatory part that prevents formation of the NLRP1 inflammasome: in absence of pathogens and other damage-associated signals, interacts with the C-terminal part of NLRP1 (NACHT, LRR and PYD domains-containing protein 1, C-terminus), preventing activation of the NLRP1 inflammasome. In response to pathogen-associated signals, this part is ubiquitinated and degraded by the proteasome, releasing the cleaved C-terminal part of the protein, which polymerizes and forms the NLRP1 inflammasome. Its function is as follows. Constitutes the active part of the NLRP1 inflammasome. In absence of pathogens and other damage-associated signals, interacts with the N-terminal part of NLRP1 (NACHT, LRR and PYD domains-containing protein 1, N-terminus), preventing activation of the NLRP1 inflammasome. In response to pathogen-associated signals, the N-terminal part of NLRP1 is degraded by the proteasome, releasing this form, which polymerizes and associates with PYCARD/ASC to form of the NLRP1 inflammasome complex: the NLRP1 inflammasome complex then directly recruits pro-caspase-1 (proCASP1) and promotes caspase-1 (CASP1) activation, leading to gasdermin-D (GSDMD) cleavage and subsequent pyroptosis. Functionally, it is unclear whether is involved in inflammasome formation. It is not cleaved within the FIIND domain, does not assemble into specks, nor promote IL1B release. However, in an vitro cell-free system, it has been shown to be activated by MDP. This chain is NACHT, LRR and PYD domains-containing protein 1, found in Homo sapiens (Human).